A 92-amino-acid chain; its full sequence is DNA/RNA-binding protein Alba (92 aa).

K11 bears the N6-acetyllysine mark.

Belongs to the histone-like Alba family. In terms of processing, acetylated. Acetylation at Lys-11 decreases DNA-binding affinity.

It localises to the cytoplasm. Its subcellular location is the chromosome. In terms of biological role, binds double-stranded DNA tightly but without sequence specificity. Involved in DNA compaction. The chain is DNA/RNA-binding protein Alba from Pyrobaculum neutrophilum (strain DSM 2338 / JCM 9278 / NBRC 100436 / V24Sta) (Thermoproteus neutrophilus).